We begin with the raw amino-acid sequence, 275 residues long: Small ribosomal subunit protein uS3 (275 aa).

The KH type-2 domain occupies 38–106; that stretch reads IRKLLATGLE…QVQLNILEVK (69 aa). A disordered region spans residues 215–275; the sequence is AAAAPASDRP…AEAPAESTES (61 aa). Residues 237–275 are compositionally biased toward low complexity; that stretch reads SGSAGTTATSTEAGRAATSDAPAAGTAAAAEAPAESTES.

This sequence belongs to the universal ribosomal protein uS3 family. In terms of assembly, part of the 30S ribosomal subunit. Forms a tight complex with proteins S10 and S14.

Binds the lower part of the 30S subunit head. Binds mRNA in the 70S ribosome, positioning it for translation. This chain is Small ribosomal subunit protein uS3, found in Mycolicibacterium smegmatis (strain ATCC 700084 / mc(2)155) (Mycobacterium smegmatis).